Here is a 161-residue protein sequence, read N- to C-terminus: Urease accessory protein UreE (161 aa).

This sequence belongs to the UreE family. Homodimer.

It is found in the cytoplasm. Its function is as follows. Involved in urease metallocenter assembly. Binds nickel. Probably functions as a nickel donor during metallocenter assembly. It is not essential for urease activity. In Proteus mirabilis (strain HI4320), this protein is Urease accessory protein UreE.